The following is a 426-amino-acid chain: MQCDFRVHQDARLARVYYFTEVWWMFIFKFLEPKMLINSVLFLAIWSSSFAEESSSSDATSNKRAAMGFQDMRGNKNLIPTSLEHNKLSKRTLMDFQDNKDSNAPDIEDNLSHEFEKRAPMGFQGMRGKKGYLTPDFEDSYFRDEKRAPMGFQGMRGKKVVSDDDYYKRAPMGFQGMRGKKSLEEVLGEIEKKAAMDYYDTRDKKTYVFEYPEDYEKRLLASIRGKLKEFPMEWEKRAPMGFQGMRGKKSLLDEIEELEKRTIMGFQGMRGKKNALENYIDYYLDPDMDFDKRAPMGFQGMRGKKDSDKRAPMGFQGMRGKRNTGQRFDTGINFNIRSSNEYQGTNNRRNALASCQLEKRSPFRYFEMRGKKNPRWELRGMFVGVRGKKWATAPYEDDSPFISVFDNTERIGVDGDSPAILGNSIS.

The propeptide occupies 1–116; it reads MQCDFRVHQD…IEDNLSHEFE (116 aa). Position 127 is an arginine amide (arginine 127). Residues 131–145 constitute a propeptide that is removed on maturation; the sequence is GYLTPDFEDSYFRDE. The residue at position 156 (arginine 156) is an Arginine amide. Residues 160–167 constitute a propeptide that is removed on maturation; that stretch reads VVSDDDYY. Residue arginine 178 is modified to Arginine amide. A propeptide spanning residues 182–235 is cleaved from the precursor; the sequence is SLEEVLGEIEKKAAMDYYDTRDKKTYVFEYPEDYEKRLLASIRGKLKEFPMEWE. Arginine 246 bears the Arginine amide mark. A propeptide spanning residues 250–259 is cleaved from the precursor; it reads SLLDEIEELE. Arginine 270 bears the Arginine amide mark. Residues 274–291 constitute a propeptide that is removed on maturation; sequence NALENYIDYYLDPDMDFD. Positions 299 to 329 are disordered; that stretch reads QGMRGKKDSDKRAPMGFQGMRGKRNTGQRFD. Arginine amide is present on arginine 302. A propeptide spanning residues 306 to 308 is cleaved from the precursor; sequence DSD. Position 319 is an arginine amide (arginine 319). Positions 323–358 are excised as a propeptide; sequence NTGQRFDTGINFNIRSSNEYQGTNNRRNALASCQLE. Residues arginine 369 and arginine 386 each carry the arginine amide modification. Residues 390 to 426 constitute a propeptide that is removed on maturation; the sequence is WATAPYEDDSPFISVFDNTERIGVDGDSPAILGNSIS.

This sequence belongs to the tachykinin family. As to expression, tachykinins (TK) are expressed throughout the nervous system. APMGFQGMR-amide is also expressed in the retrocerebral complex (at protein level).

Its subcellular location is the secreted. Tachykinins are active peptides which excite neurons, evoke behavioral responses, are potent vasodilators and secretagogues, and contract (directly or indirectly) many smooth muscles. The protein is Tachykinins of Camponotus floridanus (Florida carpenter ant).